The chain runs to 606 residues: Methionine--tRNA ligase (606 aa).

A 'HIGH' region motif is present at residues 14–24 (PYANGPRHIGH). Zn(2+)-binding residues include C146, C149, C159, and C162. Positions 351 to 355 (KFSSS) match the 'KMSKS' region motif. S354 lines the ATP pocket.

Belongs to the class-I aminoacyl-tRNA synthetase family. MetG type 1 subfamily. Monomer. The cofactor is Zn(2+).

Its subcellular location is the cytoplasm. It carries out the reaction tRNA(Met) + L-methionine + ATP = L-methionyl-tRNA(Met) + AMP + diphosphate. Functionally, is required not only for elongation of protein synthesis but also for the initiation of all mRNA translation through initiator tRNA(fMet) aminoacylation. This is Methionine--tRNA ligase from Thermobifida fusca (strain YX).